A 428-amino-acid polypeptide reads, in one-letter code: MQDSLTLQPIALVDGTVNLPGSKSVSNRALLLAALAEGTTRLTNLLDSDDVRHMLDALKAIGVKYSLSADRTCCEIVGQGGPLNAKEPLELFLGNAGTAMRPLAAALCIGNGDVVLTGEPRMKERPIGHLVDALRQGGAEVEYLEQENYPPLRVKGGFSGGEVTVNGSVSSQFLTALLMAAPLAPNDTRIVIKGDLVSKPYIDITLKLMATFGVVVENNDYDTFHISGQQQYQATREYLVEGDASSASYFLAAAAIKGGTVKVTGIGRNSMQGDIHFADVLEKMGASVEWGDDYIACTRGDLNAVDLDMNHIPDAAMTIATTALFAQGTTVMRNIYNWRVKETDRLTAMATELRKVGAEVEEGHDFISITPPAKIVFAEIGTYNDHRMAMCFSLVALSSSPVTILDPKCTAKTFPDYFEQLARLSHLA.

3-phosphoshikimate contacts are provided by lysine 23, serine 24, and arginine 28. Lysine 23 contacts phosphoenolpyruvate. Phosphoenolpyruvate contacts are provided by glycine 97 and arginine 125. Residues serine 170, serine 171, glutamine 172, serine 198, aspartate 314, asparagine 337, and lysine 341 each contribute to the 3-phosphoshikimate site. Glutamine 172 is a phosphoenolpyruvate binding site. Aspartate 314 serves as the catalytic Proton acceptor. Positions 345, 387, and 412 each coordinate phosphoenolpyruvate.

It belongs to the EPSP synthase family. In terms of assembly, monomer.

The protein localises to the cytoplasm. It catalyses the reaction 3-phosphoshikimate + phosphoenolpyruvate = 5-O-(1-carboxyvinyl)-3-phosphoshikimate + phosphate. It participates in metabolic intermediate biosynthesis; chorismate biosynthesis; chorismate from D-erythrose 4-phosphate and phosphoenolpyruvate: step 6/7. Functionally, catalyzes the transfer of the enolpyruvyl moiety of phosphoenolpyruvate (PEP) to the 5-hydroxyl of shikimate-3-phosphate (S3P) to produce enolpyruvyl shikimate-3-phosphate and inorganic phosphate. In Erwinia tasmaniensis (strain DSM 17950 / CFBP 7177 / CIP 109463 / NCPPB 4357 / Et1/99), this protein is 3-phosphoshikimate 1-carboxyvinyltransferase.